A 132-amino-acid chain; its full sequence is uncharacterized protein (132 aa).

Positions 1–35 (MSFEYRHYKREAKICTCRGGWAHVLLCIGVSQGAC) are cleaved as a signal peptide. A disordered region spans residues 91-132 (AHPGSHSDQPPGVPSRRKSRLERWSPSVSRSTSPPTEAPFCL). Positions 115–125 (SPSVSRSTSPP) are enriched in low complexity.

It is found in the secreted. This is an uncharacterized protein from Homo sapiens (Human).